The sequence spans 817 residues: DNA gyrase subunit A (817 aa).

A Topo IIA-type catalytic domain is found at 39-505; it reads LPDARDGLKP…AVEDVSIEDL (467 aa). Residue Tyr127 is the O-(5'-phospho-DNA)-tyrosine intermediate of the active site. The GyrA-box motif lies at 532–538; it reads QGRGGKG.

This sequence belongs to the type II topoisomerase GyrA/ParC subunit family. In terms of assembly, heterotetramer, composed of two GyrA and two GyrB chains. In the heterotetramer, GyrA contains the active site tyrosine that forms a transient covalent intermediate with DNA, while GyrB binds cofactors and catalyzes ATP hydrolysis.

The protein resides in the cytoplasm. The catalysed reaction is ATP-dependent breakage, passage and rejoining of double-stranded DNA.. Its function is as follows. A type II topoisomerase that negatively supercoils closed circular double-stranded (ds) DNA in an ATP-dependent manner to modulate DNA topology and maintain chromosomes in an underwound state. Negative supercoiling favors strand separation, and DNA replication, transcription, recombination and repair, all of which involve strand separation. Also able to catalyze the interconversion of other topological isomers of dsDNA rings, including catenanes and knotted rings. Type II topoisomerases break and join 2 DNA strands simultaneously in an ATP-dependent manner. The sequence is that of DNA gyrase subunit A from Aminobacterium colombiense (strain DSM 12261 / ALA-1).